Reading from the N-terminus, the 2167-residue chain is SH3 and multiple ankyrin repeat domains protein 1 (2167 aa).

The disordered stretch occupies residues 1–63 (MTHSPATSED…TRGLQGRSMS (63 aa)). Positions 17 to 32 (SECPEGGSESDSSPDG) are enriched in low complexity. Gly residues predominate over residues 33-47 (PGRGPQGTRGRGSGA). Position 43 is an omega-N-methylarginine (Arg-43). A Phosphotyrosine modification is found at Tyr-186. ANK repeat units follow at residues 212–242 (SGETPLTLAAQTEGSVEVIRTLCLGGAHIDF), 246–275 (DGMTALHKAACARHCLALTALLDLGGSPNY), 279–309 (RGLTPLFHTAMVGGDPRCCELLLYNRAQLGI), 313–342 (NGWQEIHQACQRGHSQHLEHLLFYGAEPGA), 346–375 (SGNTALHICALYNKETCARILLYRGANKDV), and 379–407 (NGQTPFQVAVIAGNFELGELIRNHREQDV). 2 disordered regions span residues 413-432 (SPKYAARRRGPPGAGLTVPP) and 454-546 (PGAS…SRGR). Residues 454–479 (PGASSSGTPGPTSGSQGQSQPSAPST) show a composition bias toward low complexity. Gly residues predominate over residues 527–542 (PAGGTGGSGGPGGSLG). Position 540 is a phosphoserine (Ser-540). The residue at position 544 (Arg-544) is an Omega-N-methylarginine. Residues 554–613 (VPGRSFMAVKSYQAQGEGEISLSKGEKIKVLSIGEGGFWEGQVKGRVGWFPSDCLEEVAN) enclose the SH3 domain. In terms of domain architecture, PDZ spans 663 to 757 (TVLLQKKDSE…TLMVKVVMVT (95 aa)). Ser-671 and Ser-791 each carry phosphoserine. Residues 841-894 (ISASESPGPGGLASLGKHRPKGFFATESSFDPHHRSQPSYDRPSFLPPGPGLML) form a disordered region. Ser-898 carries the post-translational modification Phosphoserine. Disordered regions lie at residues 917–1233 (SRSL…LDFT) and 1245–1290 (RREG…RHSK). Residues 928–947 (IPPPPTTSPPEPPYSTPPAP) are compositionally biased toward pro residues. Arg-958 is modified (omega-N-methylarginine). A compositionally biased stretch (low complexity) spans 969–980 (PLPASSPSSFDG). A compositionally biased stretch (basic residues) spans 1004-1028 (AHHHPPHHHHHHAPPPQPHHHHAHP). Residue Arg-1059 is modified to Omega-N-methylarginine. Low complexity predominate over residues 1064 to 1089 (SPTSGAPSPSHHSSSGGSSGPAQAPA). Omega-N-methylarginine is present on residues Arg-1098 and Arg-1109. Composition is skewed to low complexity over residues 1132–1146 (SLPPASSPTSPALPR) and 1171–1184 (STSSSGRSSQGSST). The span at 1203–1224 (SPAPATSPVPPSPSPVPTPASP) shows a compositional bias: pro residues. Over residues 1245–1256 (RREGGWQNEARR) the composition is skewed to basic and acidic residues. At Arg-1257 the chain carries Asymmetric dimethylarginine. Phosphoserine is present on Ser-1291. Disordered stretches follow at residues 1308–1331 (GGSSGGYGAYAAGSRAYGGSGSSS), 1361–1417 (LAAR…VLRL), 1429–1458 (RAGLGSQEKALTASPPAARRSLLHRLPPTA), 1500–1725 (FLEN…AGVA), 1740–1790 (GQAF…TPTS), 1828–1866 (VPPVPLPTASSLPRKLLPWEEGPGPPPPPLPGPLSQPQA), 1898–1988 (PWAR…STRH), and 2002–2029 (RRAPSPSLLPASDHKVSPAPRPSSLPIL). Positions 1363-1372 (ARERALKESS) are enriched in basic and acidic residues. The span at 1378-1395 (PQPPPRPPSPRYDAPPPT) shows a compositional bias: pro residues. A compositionally biased stretch (basic residues) spans 1396-1408 (LHHHSPHSPHSPH). Arg-1429 carries the post-translational modification Omega-N-methylarginine. Residue Ser-1442 is modified to Phosphoserine. A compositionally biased stretch (low complexity) spans 1530–1541 (RRVLPTSPTSPR). Residues 1589 to 1615 (PLTPGPPHPLPDPPSPATPLPAAPPPA) are compositionally biased toward pro residues. The segment covering 1624 to 1641 (DSTASSLTSYDSEVATLT) has biased composition (polar residues). Over residues 1648–1676 (PGDPPAPGPPAPAAPAPPAPQPGPDPPPG) the composition is skewed to pro residues. A compositionally biased stretch (basic and acidic residues) spans 1684-1694 (VDSRSSSDHPL). Over residues 1695 to 1708 (ETISSASTLSSLSA) the composition is skewed to low complexity. Residues 1709–1724 (EGGGNTGGVAGGGAGV) are compositionally biased toward gly residues. The span at 1850-1861 (PGPPPPPLPGPL) shows a compositional bias: pro residues. Arg-1901 bears the Omega-N-methylarginine mark. Low complexity-rich tracts occupy residues 1934–1945 (SQTSLLSKPSSS), 1960–1985 (TGSGVSSSTAAAPGATSPSASSASAS), and 2002–2012 (RRAPSPSLLPA). Residues Arg-2022, Arg-2042, and Arg-2080 each carry the omega-N-methylarginine modification. Residues 2104–2167 (WTKFDVADWL…DRALKFFLER (64 aa)) form the SAM domain.

Belongs to the SHANK family. May homomultimerize via its SAM domain. Interacts with the C-terminus of SSTR2 via the PDZ domain. Interacts with SHARPIN, SPTAN1, HOMER1 and DLGAP1/GKAP. Part of a complex with DLG4/PSD-95 and DLGAP1/GKAP. Interacts with BAIAP2. Interacts with IGSF9. Interacts with HOMER1 and HOMER3. As to expression, in brain, highly expressed in cortex, hippocampus and cerebellum.

The protein resides in the cytoplasm. It localises to the synapse. The protein localises to the postsynaptic density. Functionally, seems to be an adapter protein in the postsynaptic density (PSD) of excitatory synapses that interconnects receptors of the postsynaptic membrane including NMDA-type and metabotropic glutamate receptors, and the actin-based cytoskeleton. Plays a role in the structural and functional organization of the dendritic spine and synaptic junction. Overexpression promotes maturation of dendritic spines and the enlargement of spine heads via its ability to recruit Homer to postsynaptic sites, and enhances presynaptic function. The polypeptide is SH3 and multiple ankyrin repeat domains protein 1 (Shank1) (Mus musculus (Mouse)).